The primary structure comprises 243 residues: Protein GrpE (243 aa).

It belongs to the GrpE family. In terms of assembly, homodimer.

It is found in the cytoplasm. Functionally, participates actively in the response to hyperosmotic and heat shock by preventing the aggregation of stress-denatured proteins, in association with DnaK and GrpE. It is the nucleotide exchange factor for DnaK and may function as a thermosensor. Unfolded proteins bind initially to DnaJ; upon interaction with the DnaJ-bound protein, DnaK hydrolyzes its bound ATP, resulting in the formation of a stable complex. GrpE releases ADP from DnaK; ATP binding to DnaK triggers the release of the substrate protein, thus completing the reaction cycle. Several rounds of ATP-dependent interactions between DnaJ, DnaK and GrpE are required for fully efficient folding. The sequence is that of Protein GrpE from Mycoplasma mobile (strain ATCC 43663 / 163K / NCTC 11711) (Mesomycoplasma mobile).